Here is a 480-residue protein sequence, read N- to C-terminus: ATP synthase subunit beta (480 aa).

153-160 lines the ATP pocket; that stretch reads GGAGVGKT.

It belongs to the ATPase alpha/beta chains family. In terms of assembly, F-type ATPases have 2 components, CF(1) - the catalytic core - and CF(0) - the membrane proton channel. CF(1) has five subunits: alpha(3), beta(3), gamma(1), delta(1), epsilon(1). CF(0) has three main subunits: a(1), b(2) and c(9-12). The alpha and beta chains form an alternating ring which encloses part of the gamma chain. CF(1) is attached to CF(0) by a central stalk formed by the gamma and epsilon chains, while a peripheral stalk is formed by the delta and b chains.

The protein resides in the cell membrane. It catalyses the reaction ATP + H2O + 4 H(+)(in) = ADP + phosphate + 5 H(+)(out). In terms of biological role, produces ATP from ADP in the presence of a proton gradient across the membrane. The catalytic sites are hosted primarily by the beta subunits. The chain is ATP synthase subunit beta from Lactobacillus gasseri (strain ATCC 33323 / DSM 20243 / BCRC 14619 / CIP 102991 / JCM 1131 / KCTC 3163 / NCIMB 11718 / NCTC 13722 / AM63).